Here is a 534-residue protein sequence, read N- to C-terminus: Kelch repeat and BTB domain-containing protein 4 (534 aa).

The interval 1 to 25 (MKGGNADSWQREKLASMESPEEPGA) is disordered. Residues 61–128 (ADVTISVEGR…IYHGTVKLRA (68 aa)) form the BTB domain. Positions 163–255 (CLQVMWLADR…SLKEIGENVH (93 aa)) constitute a BACK domain. Kelch repeat units lie at residues 255-301 (HIYL…KHGG), 302-344 (DLYV…SVPG), 347-394 (AIYS…NLNG), 396-446 (IYLL…VHKD), and 448-497 (VFIV…VFRD).

In terms of assembly, component of the BCR(KBTBD4) E3 ubiquitin ligase complex, at least composed of CUL3, KBTBD4 and RBX1.

Its function is as follows. Substrate-specific adapter of a BCR (BTB-CUL3-RBX1) E3 ubiquitin ligase complex which targets CoREST corepressor complex components RCOR1, KDM1A/LSD1 and HDAC2 for proteasomal degradation. RCOR1 is likely to be the primary target while degradation of KDM1A and HDAC2 is likely due to their association with RCOR1. Also targets RCOR3, MIER2 and MIER3 for proteasomal degradation as well as associated proteins ZNF217 and RREB1. Degradation is dependent on the presence of an ELM2 domain in the target proteins. This is Kelch repeat and BTB domain-containing protein 4 (KBTBD4) from Homo sapiens (Human).